The following is a 471-amino-acid chain: Eremophilane O-acetyltransferase prx11 (471 aa).

Belongs to the fumigaclavine B O-acetyltransferase family. In terms of assembly, monomer.

It functions in the pathway sesquiterpene biosynthesis. Its function is as follows. O-acetyltransferase; part of the gene cluster that mediates the biosynthesis of PR-toxin, a bicyclic sesquiterpene belonging to the eremophilane class and acting as a mycotoxin. The first step of the pathway is catalyzed by the aristolochene synthase which performs the cyclization of trans,trans-farnesyl diphosphate (FPP) to the bicyclic sesquiterpene aristolochene. Following the formation of aristolochene, the non-oxygenated aristolochene is converted to the trioxygenated intermediate eremofortin B, via 7-epi-neopetasone. This conversion appears to involve three enzymes, a hydroxysterol oxidase-like enzyme, the quinone-oxidase prx3 that forms the quinone-type-structure in the bicyclic nucleus of aristolochene with the C8-oxo group and the C-3 hydroxyl group, and the P450 monooxygenase prx9 that introduces the epoxide at the double bond between carbons 1 and 2. No monoxy or dioxy-intermediates have been reported to be released to the broth, so these three early oxidative reactions may be coupled together. Eremofortin B is further oxidized by another P450 monooxygenase, that introduces a second epoxide between carbons 7 and 11 prior to acetylation to eremofortin A by the acetyltransferase prx11. The second epoxidation may be performed by a second P450 monooxygenase. After the acetylation step, eremofortin A is converted to eremofortin C and then to PR-toxin. First the conversion of eremofortin A to eremofortin C proceeds by oxidation of the side chain of the molecule at C-12 and is catalyzed by the short-chain oxidoreductase prx1. The cytochrome P450 monooxygenase prx8 also plays a role in this step. The primary alcohol formed at C-12 is finally oxidized by the short-chain alcohol dehydrogenase prx4 that forms PR-toxin. The sequence is that of Eremophilane O-acetyltransferase prx11 from Penicillium rubens (strain ATCC 28089 / DSM 1075 / NRRL 1951 / Wisconsin 54-1255) (Penicillium chrysogenum).